Reading from the N-terminus, the 83-residue chain is Sulfur carrier protein TusA (83 aa).

Cys-19 acts as the Cysteine persulfide intermediate in catalysis.

It belongs to the sulfur carrier protein TusA family.

The protein resides in the cytoplasm. Its function is as follows. Sulfur carrier protein which probably makes part of a sulfur-relay system. The chain is Sulfur carrier protein TusA from Vibrio atlanticus (strain LGP32) (Vibrio splendidus (strain Mel32)).